The chain runs to 2293 residues: G-protein coupled receptor 179 (2293 aa).

An N-terminal signal peptide occupies residues 1-27 (MGARAVVISSLAWGLLSCCFLCSGALG). Residues 62–245 (FLYSGDVQRL…CHEGQLRPGW (184 aa)) are cache-like region. N-linked (GlcNAc...) asparagine glycosylation is present at N75. A disulfide bridge links C76 with C236. N-linked (GlcNAc...) asparagine glycosylation occurs at N298. 7 helical membrane passes run 383–403 (AVLA…LVAY), 416–436 (IVLL…VFIL), 445–465 (CVAL…TIIL), 494–514 (LGQL…GALE), 544–564 (YIMV…CYAT), 585–602 (LLLS…VPSL), and 608–628 (LLLF…LIFI). C445 and C537 are joined by a disulfide. The N-linked (GlcNAc...) asparagine glycan is linked to N661. Residues 733–812 (QHSRDSGSLG…GRESLADGPP (80 aa)) are disordered. Over residues 738–759 (SGSLGLGSLPGSSRRRLLSSSL) the composition is skewed to low complexity. Over residues 773–782 (STYDHHREHN) the composition is skewed to basic and acidic residues. N-linked (GlcNAc...) asparagine glycosylation occurs at N823. Disordered stretches follow at residues 872–935 (EERK…HPPI), 1046–1235 (GTGE…NPAL), 1275–1294 (ERTE…LSRS), 1326–1345 (EAVC…QLVH), 1388–1411 (GTST…ATFW), 1479–1560 (ELAG…HGGS), 1578–1770 (ATLS…VCPW), 1792–1828 (TVGK…TSKG), 1844–1882 (WKPP…KGEL), 1924–2051 (SSSH…GSEK), and 2212–2293 (FLPE…WDCE). Positions 1080-1089 (LKTPLQQGSV) are enriched in polar residues. Basic and acidic residues-rich tracts occupy residues 1105-1123 (TYKE…KGKP), 1173-1186 (CQKE…DRNK), and 1275-1286 (ERTEGGSLEKKP). Basic and acidic residues-rich tracts occupy residues 1546–1555 (ASSKAGEKLL) and 1597–1632 (RTSE…RIQK). Over residues 1644 to 1663 (PGSTPQRDTEKAQASLQRQG) the composition is skewed to polar residues. Basic and acidic residues-rich tracts occupy residues 1682–1698 (GEER…RPND) and 1717–1728 (KKSERLGSEKEV). The segment covering 1737–1747 (PGDSSQQPDTP) has biased composition (polar residues). 3 stretches are compositionally biased toward basic and acidic residues: residues 1748 to 1761 (NTEK…EHGS), 1796 to 1813 (GLER…RQNL), and 1872 to 1882 (ASDRASEKGEL). A compositionally biased stretch (polar residues) spans 1937–1948 (RVSSQPLVSTGD). The span at 1979–2007 (TETEMSRQDEKEKSQEEKERAPETRDHEG) shows a compositional bias: basic and acidic residues. Over residues 2283–2293 (SPPPDYPWDCE) the composition is skewed to pro residues.

The protein belongs to the G-protein coupled receptor 3 family. Homodimer. Associates with the R7 group RGS-GNB5 complexes, composed of an R7 group RGS subunit (RGS6, RGS7, RGS9 or RGS11) and GNB5, promoting their localization to the cell membrane and regulating the GTPase activator activity of R7 RGS proteins. Interacts with TRPM1. Interacts with GRM6. Interacts with EGFLAM; transsynaptic interaction is required for synaptic organization of photoreceptor cells.

The protein localises to the cell membrane. It localises to the postsynaptic cell membrane. It is found in the cell projection. The protein resides in the dendrite. In terms of biological role, orphan receptor involved in vision. Required for signal transduction through retinal depolarizing bipolar cells. Acts as an atypical G-protein coupled receptor that recruits and regulates the R7 group RGS-GNB5 complexes instead of activating G proteins: promotes the GTPase activator activity of R7 RGS proteins, increasing the GTPase activity of G protein alpha subunits, thereby driving them into their inactive GDP-bound form. Associates with components of metabotropic signaling cascade in retina ON-bipolar neurons, such as TRPM1 and GRM6: may control the ability of the GRM6 cascade to gate TRPM1. The polypeptide is G-protein coupled receptor 179 (Mus musculus (Mouse)).